Here is a 248-residue protein sequence, read N- to C-terminus: 5'-nucleotidase SurE (248 aa).

Residues Asp8, Asp9, Ser39, and Asn91 each coordinate a divalent metal cation.

The protein belongs to the SurE nucleotidase family. It depends on a divalent metal cation as a cofactor.

The protein resides in the cytoplasm. It carries out the reaction a ribonucleoside 5'-phosphate + H2O = a ribonucleoside + phosphate. Functionally, nucleotidase that shows phosphatase activity on nucleoside 5'-monophosphates. This chain is 5'-nucleotidase SurE, found in Neisseria gonorrhoeae (strain ATCC 700825 / FA 1090).